The chain runs to 645 residues: Threonine--tRNA ligase (645 aa).

Residues 1–63 (MEQINIQFPD…ETDGSIGIVT (63 aa)) form the TGS domain. The catalytic stretch occupies residues 242–540 (DHRKIGKELE…LTEETKGAFP (299 aa)). Residues cysteine 336, histidine 387, and histidine 517 each contribute to the Zn(2+) site.

Belongs to the class-II aminoacyl-tRNA synthetase family. In terms of assembly, homodimer. Requires Zn(2+) as cofactor.

It localises to the cytoplasm. It carries out the reaction tRNA(Thr) + L-threonine + ATP = L-threonyl-tRNA(Thr) + AMP + diphosphate + H(+). Its function is as follows. Catalyzes the attachment of threonine to tRNA(Thr) in a two-step reaction: L-threonine is first activated by ATP to form Thr-AMP and then transferred to the acceptor end of tRNA(Thr). Also edits incorrectly charged L-seryl-tRNA(Thr). The protein is Threonine--tRNA ligase of Staphylococcus aureus (strain Mu3 / ATCC 700698).